The following is a 96-amino-acid chain: UPF0235 protein PC1_3453 (96 aa).

Belongs to the UPF0235 family.

The chain is UPF0235 protein PC1_3453 from Pectobacterium carotovorum subsp. carotovorum (strain PC1).